Consider the following 144-residue polypeptide: Granulocyte-macrophage colony-stimulating factor (144 aa).

The N-terminal stretch at 1-17 (MWLQNLLLLGTVVCSFS) is a signal peptide. O-linked (GalNAc...) serine glycosylation is present at Ser24. Thr27 carries an O-linked (GalNAc...) threonine glycan. N-linked (GlcNAc...) asparagine glycosylation is found at Asn44 and Asn54. Cystine bridges form between Cys71–Cys113 and Cys105–Cys138.

The protein belongs to the GM-CSF family. Monomer. The signaling GM-CSF receptor complex is a dodecamer of two head-to-head hexamers of two alpha, two beta, and two ligand subunits.

The protein resides in the secreted. In terms of biological role, cytokine that stimulates the growth and differentiation of hematopoietic precursor cells from various lineages, including granulocytes, macrophages, eosinophils and erythrocytes. The protein is Granulocyte-macrophage colony-stimulating factor (CSF2) of Cervus elaphus (Red deer).